The sequence spans 480 residues: tRNA-2-methylthio-N(6)-dimethylallyladenosine synthase (480 aa).

One can recognise an MTTase N-terminal domain in the interval 29-145; it reads GSFWIQTFGC…LEALLTQVDN (117 aa). Residues Cys-38, Cys-74, Cys-108, Cys-180, Cys-184, and Cys-187 each contribute to the [4Fe-4S] cluster site. The 238-residue stretch at 166-403 folds into the Radical SAM core domain; that stretch reads RDSTICAWVN…NALVERIALQ (238 aa). The TRAM domain occupies 406 to 474; sequence SRYSGKVEQV…AFSLSGTPCE (69 aa).

It belongs to the methylthiotransferase family. MiaB subfamily. Monomer. [4Fe-4S] cluster is required as a cofactor.

The protein resides in the cytoplasm. It carries out the reaction N(6)-dimethylallyladenosine(37) in tRNA + (sulfur carrier)-SH + AH2 + 2 S-adenosyl-L-methionine = 2-methylsulfanyl-N(6)-dimethylallyladenosine(37) in tRNA + (sulfur carrier)-H + 5'-deoxyadenosine + L-methionine + A + S-adenosyl-L-homocysteine + 2 H(+). Functionally, catalyzes the methylthiolation of N6-(dimethylallyl)adenosine (i(6)A), leading to the formation of 2-methylthio-N6-(dimethylallyl)adenosine (ms(2)i(6)A) at position 37 in tRNAs that read codons beginning with uridine. The sequence is that of tRNA-2-methylthio-N(6)-dimethylallyladenosine synthase from Prochlorococcus marinus (strain MIT 9313).